The primary structure comprises 327 residues: Ribosomal RNA small subunit methyltransferase H (327 aa).

S-adenosyl-L-methionine-binding positions include 36–38 (GGH), D55, L89, D103, and Q110. The disordered stretch occupies residues 286-327 (GAEPASDTEIEQNARAGSVRLRAAERTAAEPGRAHNPTGGVR).

It belongs to the methyltransferase superfamily. RsmH family.

It localises to the cytoplasm. It carries out the reaction cytidine(1402) in 16S rRNA + S-adenosyl-L-methionine = N(4)-methylcytidine(1402) in 16S rRNA + S-adenosyl-L-homocysteine + H(+). Its function is as follows. Specifically methylates the N4 position of cytidine in position 1402 (C1402) of 16S rRNA. In Parafrankia sp. (strain EAN1pec), this protein is Ribosomal RNA small subunit methyltransferase H.